Reading from the N-terminus, the 333-residue chain is Ferrochelatase (333 aa).

His202 and Glu284 together coordinate Fe cation.

It belongs to the ferrochelatase family.

It is found in the cytoplasm. The enzyme catalyses heme b + 2 H(+) = protoporphyrin IX + Fe(2+). It functions in the pathway porphyrin-containing compound metabolism; protoheme biosynthesis; protoheme from protoporphyrin-IX: step 1/1. Functionally, catalyzes the ferrous insertion into protoporphyrin IX. The protein is Ferrochelatase of Francisella tularensis subsp. novicida (strain U112).